A 196-amino-acid chain; its full sequence is Prefoldin subunit 3 (196 aa).

Alanine 2 bears the N-acetylalanine mark. Lysine 58 is modified (N6-acetyllysine).

Belongs to the prefoldin subunit alpha family. Heterohexamer of two PFD-alpha type and four PFD-beta type subunits. Binds to the C-terminal part of VHL.

The protein localises to the cytoplasm. Its subcellular location is the nucleus. Its function is as follows. Binds specifically to cytosolic chaperonin (c-CPN) and transfers target proteins to it. Binds to nascent polypeptide chain and promotes folding in an environment in which there are many competing pathways for nonnative proteins. The chain is Prefoldin subunit 3 (Vbp1) from Mus musculus (Mouse).